Consider the following 459-residue polypeptide: tRNA(Ile2) 2-agmatinylcytidine synthetase TiaS (459 aa).

A DNA-binding region (OB) is located at residues 282–360 (VRVRVWVASI…TINLEKLHII (79 aa)).

The protein belongs to the TiaS family.

The protein localises to the cytoplasm. The catalysed reaction is cytidine(34) in tRNA(Ile2) + agmatine + ATP + H2O = 2-agmatinylcytidine(34) in tRNA(Ile2) + AMP + 2 phosphate + 2 H(+). Its function is as follows. ATP-dependent agmatine transferase that catalyzes the formation of 2-agmatinylcytidine (agm2C) at the wobble position (C34) of tRNA(Ile2), converting the codon specificity from AUG to AUA. The chain is tRNA(Ile2) 2-agmatinylcytidine synthetase TiaS from Staphylothermus marinus (strain ATCC 43588 / DSM 3639 / JCM 9404 / F1).